A 197-amino-acid chain; its full sequence is MSSKEQKTPEGQAPEEIITEQHEEVEAVEPDASAEQVDPRDEKIANLEAQLTEAQNREREGVLRVKAEMENLRRRTELDVEKAHKFALEKFVNELLPVIDSLDRALEVADKANPDMTAMVEGLELTLKSMLDVVRKFGVEVVAETNVALDPNVHQAIAMVESEDVAAGNVLAVMQKGYTLNGRTIRAAMVTVAKAKG.

A disordered region spans residues 1–41 (MSSKEQKTPEGQAPEEIITEQHEEVEAVEPDASAEQVDPRD).

The protein belongs to the GrpE family. As to quaternary structure, homodimer.

It is found in the cytoplasm. Functionally, participates actively in the response to hyperosmotic and heat shock by preventing the aggregation of stress-denatured proteins, in association with DnaK and GrpE. It is the nucleotide exchange factor for DnaK and may function as a thermosensor. Unfolded proteins bind initially to DnaJ; upon interaction with the DnaJ-bound protein, DnaK hydrolyzes its bound ATP, resulting in the formation of a stable complex. GrpE releases ADP from DnaK; ATP binding to DnaK triggers the release of the substrate protein, thus completing the reaction cycle. Several rounds of ATP-dependent interactions between DnaJ, DnaK and GrpE are required for fully efficient folding. In Enterobacter sp. (strain 638), this protein is Protein GrpE.